The chain runs to 324 residues: tRNA (cytidine(32)/guanosine(34)-2'-O)-methyltransferase (324 aa).

5 residues coordinate S-adenosyl-L-methionine: Gly-53, Trp-55, Asp-75, Asp-91, and Asp-116. Lys-156 serves as the catalytic Proton acceptor. A required for binding to WDR6 region spans residues 221–240 (DFNQLDGPTRVIVPFVACGD).

Belongs to the class I-like SAM-binding methyltransferase superfamily. RNA methyltransferase RlmE family. TRM7 subfamily. As to quaternary structure, interacts with WDR6; the interaction is direct, and required for 2'-O-methylation of position 34 in substrate tRNAs.

The protein resides in the cytoplasm. Its subcellular location is the nucleus. It catalyses the reaction cytidine(32)/guanosine(34) in tRNA + 2 S-adenosyl-L-methionine = 2'-O-methylcytidine(32)/2'-O-methylguanosine(34) in tRNA + 2 S-adenosyl-L-homocysteine + 2 H(+). In terms of biological role, methylates the 2'-O-ribose of nucleotides at positions 32 and 34 of the tRNA anticodon loop of substrate tRNAs. Requisite for faithful cytoplasmic translation. Requires THADA for methylation of the cytidine at position 32 of the anticodon loop of substrate tRNAs. Requires WDR6 for methylation of the nucleotide at position 34 of the anticodon loop of substrate tRNAs. Promotes translation efficiency of the UUU codon. Plays a role in neurogenesis. Required for expression of genes involved in neurogenesis and mitochondrial translation and energy generation. Requisite for RNA-mediated gene silencing. May modify position 32 in tRNA(Arg(ACG)), tRNA(Gln(CUG)), tRNA(Leu(UAA)), tRNA(Leu(UAG)), tRNA(Leu(AAG)), tRNA(Leu(CAG)), tRNA(Phe(GAA)), tRNA(Trp(CCA)) and tRNA(Val(AAC)), and position 34 in tRNA(Phe(GAA)), tRNA(Leu(CAA)), tRNA(Leu(UAA)), tRNA(Sec(UCA)), and tRNA(Trp(CCA)). The chain is tRNA (cytidine(32)/guanosine(34)-2'-O)-methyltransferase from Mus musculus (Mouse).